Reading from the N-terminus, the 251-residue chain is MSEEDWQVSRRLFAVLQGGVNSAMLYISRLPPDEREKYKKDFKKRLFDTETGFIKRLRKAEGIKWSFHTRDYYIGYVREMVAGSTTSLSLRMYIYISNPLWHSQYRPGLKNFNKEWPFVNMWIKTGFMWDDIEKQNICIGGEVSPGWGPGMVGIAIKAFSCGERKIEATPVMIIRGEIDPKKWCGDCWNLMCLRNSPPKTLQRLAMLACGVPAKKWRGCCNQRFVSPYRTPADLEVIQSKPSWNLLWSGEL.

It belongs to the feline lentivirus group Vif protein family.

It localises to the host cytoplasm. The protein localises to the virion. Its function is as follows. Determines virus infectivity. The polypeptide is Virion infectivity factor (vif) (Feline immunodeficiency virus (isolate Petaluma) (FIV)).